A 486-amino-acid chain; its full sequence is UDP-N-acetylmuramoyl-L-alanyl-D-glutamate--2,6-diaminopimelate ligase (486 aa).

Residue Ser33 coordinates UDP-N-acetyl-alpha-D-muramoyl-L-alanyl-D-glutamate. Residue 110-116 participates in ATP binding; it reads GTNGKTS. Residues 152 to 153, Ser179, Gln185, and Arg187 each bind UDP-N-acetyl-alpha-D-muramoyl-L-alanyl-D-glutamate; that span reads TT. Lys219 is subject to N6-carboxylysine. Meso-2,6-diaminopimelate is bound by residues Arg383, 407–410, Gly455, and Glu459; that span reads DNPR. The Meso-diaminopimelate recognition motif signature appears at 407–410; it reads DNPR.

The protein belongs to the MurCDEF family. MurE subfamily. It depends on Mg(2+) as a cofactor. Post-translationally, carboxylation is probably crucial for Mg(2+) binding and, consequently, for the gamma-phosphate positioning of ATP.

It localises to the cytoplasm. The enzyme catalyses UDP-N-acetyl-alpha-D-muramoyl-L-alanyl-D-glutamate + meso-2,6-diaminopimelate + ATP = UDP-N-acetyl-alpha-D-muramoyl-L-alanyl-gamma-D-glutamyl-meso-2,6-diaminopimelate + ADP + phosphate + H(+). The protein operates within cell wall biogenesis; peptidoglycan biosynthesis. Catalyzes the addition of meso-diaminopimelic acid to the nucleotide precursor UDP-N-acetylmuramoyl-L-alanyl-D-glutamate (UMAG) in the biosynthesis of bacterial cell-wall peptidoglycan. In Zymomonas mobilis subsp. mobilis (strain ATCC 31821 / ZM4 / CP4), this protein is UDP-N-acetylmuramoyl-L-alanyl-D-glutamate--2,6-diaminopimelate ligase.